The following is a 506-amino-acid chain: ATP synthase subunit alpha (506 aa).

Residue 171-178 (GDRKTGKT) coordinates ATP.

The protein belongs to the ATPase alpha/beta chains family. As to quaternary structure, F-type ATPases have 2 components, CF(1) - the catalytic core - and CF(0) - the membrane proton channel. CF(1) has five subunits: alpha(3), beta(3), gamma(1), delta(1), epsilon(1). CF(0) has three main subunits: a(1), b(2) and c(9-12). The alpha and beta chains form an alternating ring which encloses part of the gamma chain. CF(1) is attached to CF(0) by a central stalk formed by the gamma and epsilon chains, while a peripheral stalk is formed by the delta and b chains.

It is found in the cell inner membrane. It catalyses the reaction ATP + H2O + 4 H(+)(in) = ADP + phosphate + 5 H(+)(out). In terms of biological role, produces ATP from ADP in the presence of a proton gradient across the membrane. The alpha chain is a regulatory subunit. This Anaplasma phagocytophilum (strain HZ) protein is ATP synthase subunit alpha.